Reading from the N-terminus, the 57-residue chain is Conotoxin Cal6.39 (57 aa).

The N-terminal stretch at 1 to 18 (MSGTTVLLLTCLFLVTMA) is a signal peptide. Disulfide bonds link Cys-22–Cys-36, Cys-29–Cys-46, and Cys-35–Cys-52.

As to expression, expressed by the venom duct.

The protein localises to the secreted. Probable neurotoxin. This chain is Conotoxin Cal6.39, found in Californiconus californicus (California cone).